We begin with the raw amino-acid sequence, 1003 residues long: Rho-associated protein kinase 1 (1003 aa).

Residues 1-28 (VAPVVPDLSSDIDTSNFDDLEEDKGEEE) form a disordered region. The AGC-kinase C-terminal domain maps to 1-58 (VAPVVPDLSSDIDTSNFDDLEEDKGEEETFPIPKAFVGNQLPFVGFTYYSNRRYLSSA). The segment covering 16-28 (NFDDLEEDKGEEE) has biased composition (acidic residues). The interaction with FHOD1 stretch occupies residues 17–376 (FDDLEEDKGE…KKLKEEREAR (360 aa)). Positions 71–341 (KSLQESLQKT…RLEQEVNEHK (271 aa)) form a coiled coil. One can recognise an REM-1 domain in the interval 128 to 205 (STVSQIEKEK…LEEANDLLRT (78 aa)). N6-acetyllysine is present on Lys-296. Residues 356-595 (EAKSVAMCEM…TVSRLEEANS (240 aa)) are SHROOM3 binding. The region spanning 598–664 (TKDIEILRRE…LAEIMNRKDF (67 aa)) is the RhoBD domain. An RHOA binding region spans residues 647-659 (LKTQAVNKLAEIM). Residues 660 to 751 (NRKDFKIDRK…KLLDLSDSTS (92 aa)) adopt a coiled-coil conformation. Phosphoserine occurs at positions 754 and 757. The interval 764 to 1003 (NLPESRIEGW…VVKNTSGKTR (240 aa)) is auto-inhibitory. In terms of domain architecture, PH spans 767–966 (ESRIEGWLSV…WVTHLVKKIP (200 aa)). The segment at 877–930 (GHEFIPTLYHFPANCDACAKPLWHVFKPPPALECRRCHVKCHRDHLDKKEDLIC) adopts a Phorbol-ester/DAG-type zinc-finger fold. The segment at 968-1003 (NPPSGFVRASPRTLSTRSTANQSFRKVVKNTSGKTR) is disordered. Ser-977 is subject to Phosphoserine. Positions 979–1003 (RTLSTRSTANQSFRKVVKNTSGKTR) are enriched in polar residues.

The protein belongs to the protein kinase superfamily. AGC Ser/Thr protein kinase family. Homodimer. Interacts with RHOA (activated by GTP), RHOB, RHOC, GEM, MYLC2B, RHOE, PPP1R12A, LIMK1, LIMK2, TSG101, CHORDC1, DAPK3, PFN1, PTEN and JIP3. Interacts with ITGB1BP1 (via N-terminus and PTB domain). Interacts with FHOD1 in a Src-dependent manner. Interacts with SHROOM3. Mg(2+) is required as a cofactor. In terms of processing, autophosphorylated on serine and threonine residues. Post-translationally, cleaved by caspase-3 during apoptosis. This leads to constitutive activation of the kinase and membrane blebbing.

The protein localises to the cytoplasm. The protein resides in the cytoskeleton. Its subcellular location is the microtubule organizing center. It localises to the centrosome. It is found in the centriole. The protein localises to the golgi apparatus membrane. The protein resides in the cell projection. Its subcellular location is the bleb. It localises to the cell membrane. It is found in the lamellipodium. The protein localises to the ruffle. The catalysed reaction is L-seryl-[protein] + ATP = O-phospho-L-seryl-[protein] + ADP + H(+). It catalyses the reaction L-threonyl-[protein] + ATP = O-phospho-L-threonyl-[protein] + ADP + H(+). Activated by RHOA binding. Inhibited by Y-27632. In terms of biological role, protein kinase which is a key regulator of actin cytoskeleton and cell polarity. Involved in regulation of smooth muscle contraction, actin cytoskeleton organization, stress fiber and focal adhesion formation, neurite retraction, cell adhesion and motility via phosphorylation of DAPK3, GFAP, LIMK1, LIMK2, MYL9/MLC2, TPPP, PFN1 and PPP1R12A. Phosphorylates FHOD1 and acts synergistically with it to promote SRC-dependent non-apoptotic plasma membrane blebbing. Phosphorylates JIP3 and regulates the recruitment of JNK to JIP3 upon UVB-induced stress. Acts as a suppressor of inflammatory cell migration by regulating PTEN phosphorylation and stability. Acts as a negative regulator of VEGF-induced angiogenic endothelial cell activation. Required for centrosome positioning and centrosome-dependent exit from mitosis. Plays a role in terminal erythroid differentiation. May regulate closure of the eyelids and ventral body wall by inducing the assembly of actomyosin bundles. Promotes keratinocyte terminal differentiation. Involved in osteoblast compaction through the fibronectin fibrillogenesis cell-mediated matrix assembly process, essential for osteoblast mineralization. This Pan troglodytes (Chimpanzee) protein is Rho-associated protein kinase 1 (ROCK1).